A 156-amino-acid chain; its full sequence is MNLNATILGQAIAFVLFVLFCMKYVWPPLMAAIEKRQKEIADGLASAERAHKDLDLAKASATDQLKKAKAEAQVIIEQANKRRSQILDEAKAEAEQERTKIVAQAQAEIEAERKRAREELRKQVAILAVAGAEKIIERSVDEAANSDIVDKLVAEL.

The chain crosses the membrane as a helical span at residues 11 to 31 (AIAFVLFVLFCMKYVWPPLMA).

Belongs to the ATPase B chain family. As to quaternary structure, F-type ATPases have 2 components, F(1) - the catalytic core - and F(0) - the membrane proton channel. F(1) has five subunits: alpha(3), beta(3), gamma(1), delta(1), epsilon(1). F(0) has three main subunits: a(1), b(2) and c(10-14). The alpha and beta chains form an alternating ring which encloses part of the gamma chain. F(1) is attached to F(0) by a central stalk formed by the gamma and epsilon chains, while a peripheral stalk is formed by the delta and b chains.

Its subcellular location is the cell inner membrane. In terms of biological role, f(1)F(0) ATP synthase produces ATP from ADP in the presence of a proton or sodium gradient. F-type ATPases consist of two structural domains, F(1) containing the extramembraneous catalytic core and F(0) containing the membrane proton channel, linked together by a central stalk and a peripheral stalk. During catalysis, ATP synthesis in the catalytic domain of F(1) is coupled via a rotary mechanism of the central stalk subunits to proton translocation. Component of the F(0) channel, it forms part of the peripheral stalk, linking F(1) to F(0). The chain is ATP synthase subunit b from Shigella boydii serotype 18 (strain CDC 3083-94 / BS512).